Here is a 1642-residue protein sequence, read N- to C-terminus: Cholesterol transporter ABCA5 (1642 aa).

Residues 32 to 52 (SVQEILFPLFFLFWLILISMM) form a helical membrane-spanning segment. N86 and N190 each carry an N-linked (GlcNAc...) asparagine glycan. 6 helical membrane-spanning segments follow: residues 220–240 (VILI…AIHI), 264–284 (LSWV…MAVI), 297–317 (IVIF…ALML), 327–347 (VGVV…LIVL), 355–375 (LVWL…AQVM), and 396–416 (LIIT…LAVY). Residue N458 is glycosylated (N-linked (GlcNAc...) asparagine). The ABC transporter 1 domain occupies 478 to 713 (IRISGIQKAY…WGIGYRLSMY (236 aa)). 514–521 (GHSGTGKS) is a binding site for ATP. Residues 866-886 (LLLLLIFFAVQIFMFLVHHSF) traverse the membrane as a helical segment. N-linked (GlcNAc...) asparagine glycosylation is present at N919. The helical transmembrane segment at 967–987 (VFTAVFNSTMVYSLPVMMNII) threads the bilayer. An N-linked (GlcNAc...) asparagine glycan is attached at N996. The next 6 helical transmembrane spans lie at 1021-1041 (LYFQ…YFAM), 1071-1091 (VVDI…LFAF), 1102-1122 (FLAV…FTYI), 1139-1159 (FIYS…FFLG), 1164-1184 (AVFH…GCLI), and 1207-1227 (LLVA…LLQH). The region spanning 1290–1533 (IMVYNLHKEY…FGKGYFLEIK (244 aa)) is the ABC transporter 2 domain. Residue 1333 to 1340 (GPNGAGKS) participates in ATP binding.

The protein belongs to the ABC transporter superfamily. ABCA family. N-glycosylated. Expressed in testis, epididymis, lung and brain.

Its subcellular location is the lysosome membrane. The protein localises to the late endosome membrane. It localises to the golgi apparatus membrane. It is found in the cell membrane. It carries out the reaction cholesterol(in) + ATP + H2O = cholesterol(out) + ADP + phosphate + H(+). In terms of biological role, cholesterol efflux transporter in macrophages that is responsible for APOAI/high-density lipoproteins (HDL) formation at the plasma membrane under high cholesterol levels and participates in reverse cholesterol transport. May play a role in the processing of autolysosomes. This is Cholesterol transporter ABCA5 from Rattus norvegicus (Rat).